We begin with the raw amino-acid sequence, 639 residues long: ADP-ribosylation factor-binding protein GGA1 (639 aa).

Methionine 1 carries the post-translational modification N-acetylmethionine. One can recognise a VHS domain in the interval 17–147; that stretch reads ATNPLNKELD…MLKKQGIVKS (131 aa). An interaction with ARF3 region spans residues 114-274; it reads KILELLYSWT…RLASDTEDND (161 aa). The region spanning 171 to 299 is the GAT domain; that stretch reads DEEKSKMLAR…VINLYKQLVR (129 aa). Serine 185 is modified (phosphoserine). Residues 300 to 509 form a unstructured hinge region; the sequence is GEEVNGDATA…ITVPLESIKP (210 aa). 2 disordered regions span residues 320-421 and 434-492; these read LDLS…SGLD and SLPP…QPVP. Position 355 is a phosphoserine; by CK2 (serine 355). The Autoinhibitory motif lies at 358–362; it reads DDELM. Polar residues predominate over residues 381-390; it reads GWNSFQSSDA. The residue at position 418 (serine 418) is a Phosphoserine. The segment covering 462-480 has biased composition (low complexity); sequence SSSCSSPSSSATSLLHTVS. Residues 481 to 490 show a composition bias toward pro residues; it reads PEPPRPPQQP. One can recognise a GAE domain in the interval 510–631; sequence SNILPVTVYD…NEMGDVDQFP (122 aa).

It belongs to the GGA protein family. Monomer. Interacts with GGA2 and GGA3. Binds to clathrin and activated ARFs, including ARF1, ARF5 and ARF6. Interacts with RABEP1. Interacts with RABGEF1. Interacts with the type-I membrane proteins LRP3, M6PR/CD-MPR and IGF2R/CI-MPR. Interacts (via N-terminal VHS domain) with SORL1/sorLA and SORT1 (via C-terminal cytosolic domain). Interacts with EPN4. Interacts with CCDC91. Interacts with HEATR5B/p200a. Interacts with SYNRG/gamma-synergin. Interacts (via GAE doamin) with NECAP1 and NECAP2. Interacts (via GAE domain) with AFTPH/aftiphilin. Interacts with TSG101 and UBC. Interacts with RNF11. Interacts (via VHS domain) with BACE1 (via DXXLL motif); the interaction highly increases when BACE1 is phosphorylated at 'Ser-498'. Interacts with CNST. Interacts with ADRA2B. Interacts with ARL3; the interaction recruits, in collaboration with RABEP1, PKD1:PKD2 complex to trans-Golgi network and is required for ciliary targeting. Post-translationally, phosphorylated by CK2 and dephosphorylated by PP2A. Phosphorylation of GGA1 allows the internal DXXLL motif to bind the VHS domain and to inhibit the recognition of cargo signals. In terms of processing, ubiquitinated. In terms of tissue distribution, ubiquitously expressed.

The protein resides in the golgi apparatus. It is found in the trans-Golgi network membrane. Its subcellular location is the endosome membrane. It localises to the early endosome membrane. Plays a role in protein sorting and trafficking between the trans-Golgi network (TGN) and endosomes. Mediates the ARF-dependent recruitment of clathrin to the TGN and binds ubiquitinated proteins and membrane cargo molecules with a cytosolic acidic cluster-dileucine (DXXLL) motif. Mediates export of the GPCR receptor ADRA2B to the cell surface. Required for targeting PKD1:PKD2 complex from the trans-Golgi network to the cilium membrane. Regulates retrograde transport of proteins such as phosphorylated form of BACE1 from endosomes to the trans-Golgi network. This Homo sapiens (Human) protein is ADP-ribosylation factor-binding protein GGA1 (GGA1).